Consider the following 56-residue polypeptide: Preprotein translocase subunit SecG (56 aa).

Topologically, residues 1 to 29 (MAKEKATLPPTGAGLMRFFDEDTKAVKIS) are cytoplasmic. The helical transmembrane segment at 30–51 (PRGVIALTLILVALEILLHAFG) threads the bilayer. At 52 to 56 (PQIFG) the chain is on the extracellular side.

Belongs to the SEC61-beta family. In terms of assembly, component of the protein translocase complex. Heterotrimer consisting of alpha (SecY), beta (SecG) and gamma (SecE) subunits. Can form oligomers of the heterotrimer.

Its subcellular location is the cell membrane. In terms of biological role, involved in protein export. The function of the beta subunit is unknown, but it may be involved in stabilization of the trimeric complex. This chain is Preprotein translocase subunit SecG, found in Thermococcus onnurineus (strain NA1).